Consider the following 460-residue polypeptide: Light-independent protochlorophyllide reductase subunit N (460 aa).

Residues cysteine 20, cysteine 45, and cysteine 105 each contribute to the [4Fe-4S] cluster site.

This sequence belongs to the BchN/ChlN family. Protochlorophyllide reductase is composed of three subunits; ChlL, ChlN and ChlB. Forms a heterotetramer of two ChlB and two ChlN subunits. Requires [4Fe-4S] cluster as cofactor.

It localises to the plastid. The protein localises to the chloroplast. The enzyme catalyses chlorophyllide a + oxidized 2[4Fe-4S]-[ferredoxin] + 2 ADP + 2 phosphate = protochlorophyllide a + reduced 2[4Fe-4S]-[ferredoxin] + 2 ATP + 2 H2O. The protein operates within porphyrin-containing compound metabolism; chlorophyll biosynthesis (light-independent). Its function is as follows. Component of the dark-operative protochlorophyllide reductase (DPOR) that uses Mg-ATP and reduced ferredoxin to reduce ring D of protochlorophyllide (Pchlide) to form chlorophyllide a (Chlide). This reaction is light-independent. The NB-protein (ChlN-ChlB) is the catalytic component of the complex. The sequence is that of Light-independent protochlorophyllide reductase subunit N from Adiantum capillus-veneris (Maidenhair fern).